Reading from the N-terminus, the 314-residue chain is tRNA dimethylallyltransferase (314 aa).

13–20 contributes to the ATP binding site; the sequence is GPTAVGKT. 15–20 is a binding site for substrate; that stretch reads TAVGKT. Residues 38–41 form an interaction with substrate tRNA region; it reads DSMQ.

This sequence belongs to the IPP transferase family. In terms of assembly, monomer. The cofactor is Mg(2+).

It catalyses the reaction adenosine(37) in tRNA + dimethylallyl diphosphate = N(6)-dimethylallyladenosine(37) in tRNA + diphosphate. Its function is as follows. Catalyzes the transfer of a dimethylallyl group onto the adenine at position 37 in tRNAs that read codons beginning with uridine, leading to the formation of N6-(dimethylallyl)adenosine (i(6)A). The sequence is that of tRNA dimethylallyltransferase from Bacillus subtilis (strain 168).